A 445-amino-acid chain; its full sequence is ATP-dependent protease ATPase subunit HslU (445 aa).

Residues I17, G59–E64, D254, E319, and R391 each bind ATP.

This sequence belongs to the ClpX chaperone family. HslU subfamily. As to quaternary structure, a double ring-shaped homohexamer of HslV is capped on each side by a ring-shaped HslU homohexamer. The assembly of the HslU/HslV complex is dependent on binding of ATP.

The protein resides in the cytoplasm. ATPase subunit of a proteasome-like degradation complex; this subunit has chaperone activity. The binding of ATP and its subsequent hydrolysis by HslU are essential for unfolding of protein substrates subsequently hydrolyzed by HslV. HslU recognizes the N-terminal part of its protein substrates and unfolds these before they are guided to HslV for hydrolysis. In Pseudomonas syringae pv. tomato (strain ATCC BAA-871 / DC3000), this protein is ATP-dependent protease ATPase subunit HslU.